A 274-amino-acid chain; its full sequence is Orotidine 5'-phosphate decarboxylase (274 aa).

Over residues 1–15 (MSAGRRSSGGRSAAA) the composition is skewed to low complexity. The segment at 1-21 (MSAGRRSSGGRSAAAPRFTPP) is disordered. Substrate contacts are provided by residues Asp32, Lys54, 99–108 (DLKLHDIPAT), Thr154, Arg215, Gln224, Gly244, and Arg245. The active-site Proton donor is the Lys101.

The protein belongs to the OMP decarboxylase family. Type 1 subfamily. Homodimer.

It carries out the reaction orotidine 5'-phosphate + H(+) = UMP + CO2. The protein operates within pyrimidine metabolism; UMP biosynthesis via de novo pathway; UMP from orotate: step 2/2. Catalyzes the decarboxylation of orotidine 5'-monophosphate (OMP) to uridine 5'-monophosphate (UMP). The protein is Orotidine 5'-phosphate decarboxylase of Frankia casuarinae (strain DSM 45818 / CECT 9043 / HFP020203 / CcI3).